A 387-amino-acid chain; its full sequence is tRNA pseudouridine synthase B (387 aa).

D43 acts as the Nucleophile in catalysis.

Belongs to the pseudouridine synthase TruB family. Type 1 subfamily.

The enzyme catalyses uridine(55) in tRNA = pseudouridine(55) in tRNA. Functionally, responsible for synthesis of pseudouridine from uracil-55 in the psi GC loop of transfer RNAs. In Bifidobacterium longum subsp. infantis (strain ATCC 15697 / DSM 20088 / JCM 1222 / NCTC 11817 / S12), this protein is tRNA pseudouridine synthase B.